A 932-amino-acid chain; its full sequence is Isoleucine--tRNA ligase (932 aa).

A 'HIGH' region motif is present at residues 58–68; the sequence is PYANGDIHIGH. E570 contributes to the L-isoleucyl-5'-AMP binding site. Residues 611–615 carry the 'KMSKS' region motif; it reads KMSKS. K614 contributes to the ATP binding site. 4 residues coordinate Zn(2+): C895, C898, C915, and C918.

Belongs to the class-I aminoacyl-tRNA synthetase family. IleS type 1 subfamily. As to quaternary structure, monomer. Zn(2+) is required as a cofactor.

The protein resides in the cytoplasm. It carries out the reaction tRNA(Ile) + L-isoleucine + ATP = L-isoleucyl-tRNA(Ile) + AMP + diphosphate. Functionally, catalyzes the attachment of isoleucine to tRNA(Ile). As IleRS can inadvertently accommodate and process structurally similar amino acids such as valine, to avoid such errors it has two additional distinct tRNA(Ile)-dependent editing activities. One activity is designated as 'pretransfer' editing and involves the hydrolysis of activated Val-AMP. The other activity is designated 'posttransfer' editing and involves deacylation of mischarged Val-tRNA(Ile). The protein is Isoleucine--tRNA ligase of Dechloromonas aromatica (strain RCB).